The primary structure comprises 675 residues: MTTSHMNGHVTEESDSEVKNVDLASPEEHQKHREMAVDCPGDLGTRMMPIRRSAQLERIRQQQEDMRRRREEEGKKQELDLNSSMRLKKLAQIPPKTGIDNPMFDTEEGIVLESPHYAVKILEIEDLFSSLKHIQHTLIDSQSQEDISLLLQLVQNKGFQNAFKIHNAITVHMNKASPPFPLISNAQDLAQEVQTVLKPVHHKEGQELTALLNTPHIQALLLAHDKVAEQEMQLEPITDERVYESIGQYGGETVKIVRIEKARDIPLGATVRNEMDSVIISRIVKGGAAEKSGLLHEGDEVLEINGIEIRGKDVNEVFDLLADMHGTLTFVLIPSQQIKPPPAKETVIHVKAHFDYDPSDDPYVPCRELGLSFQKGDILHVISQEDPNWWQAYREGDEDNQPLAGLVPGKSFQQQREAMKQTIEEDKEPEKSGKLWCAKKNKKKRKKVLYNANKNDDYDNEEILTYEEMSLYHQPANRKRPIILIGPQNCGQNELRQRLMNKEKDRFASAVPHTTRSRRDQEVAGRDYHFVSRQAFEADIAAGKFIEHGEFEKNLYGTSIDSVRQVINSGKICLLSLRTQSLKTLRNSDLKPYIIFIAPPSQERLRALLAKEGKNPKPEELREIIEKTREMEQNNGHYFDTAIVNSDLDKAYQELLRLINKLDTEPQWVPSTWLR.

Disordered regions lie at residues 1–34 (MTTS…KHRE) and 51–78 (RRSA…KKQE). The required for the correct localization of PALS1 and PATJ at cell-cell contacts and the normal formation of tight junctions and adherens junctions stretch occupies residues 1 to 345 (MTTSHMNGHV…QQIKPPPAKE (345 aa)). Basic and acidic residues-rich tracts occupy residues 10–34 (VTEE…KHRE) and 54–78 (AQLE…KKQE). 2 positions are modified to phosphoserine: S14 and S25. An interaction with PARD6B region spans residues 21–140 (VDLASPEEHQ…LKHIQHTLID (120 aa)). S83 and S84 each carry phosphoserine. 2 consecutive L27 domains span residues 120–177 (KILE…NKAS) and 179–235 (PFPL…MQLE). Residues 181-243 (PLISNAQDLA…LEPITDERVY (63 aa)) are interaction with LIN7C. The PDZ domain occupies 256–336 (IVRIEKARDI…TLTFVLIPSQ (81 aa)). Positions 345 to 417 (ETVIHVKAHF…PGKSFQQQRE (73 aa)) constitute an SH3 domain. The 182-residue stretch at 479–660 (KRPIILIGPQ…AYQELLRLIN (182 aa)) folds into the Guanylate kinase-like domain. 486–493 (GPQNCGQN) lines the ATP pocket.

Belongs to the MAGUK family. In terms of assembly, heterodimer with MPP1. Forms a heterotrimeric complex composed of PALS1, LIN7B and PATJ; the N-terminal L27 domain of PALS1 interacts with the L27 domain of PATJ and the C-terminal L27 domain of PALS1 interacts with the L27 domain of LIN7B. Component of a complex composed of PALS1, CRB1 and MPP4. Component of a complex whose core is composed of ARHGAP17, AMOT, PALS1, PATJ and PARD3/PAR3. Component of a complex composed of PALS1, CRB1 and EPB41L5. Within the complex, interacts (via HOOK domain) with EPB41L5 (via FERM domain), and interacts with CRB1 (via intracellular domain). Component of a complex composed of PALS1, MPP3 and CRB1; PALS1 acts as a bridging protein between MPP3 (via guanylate kinase-like domain) and CRB1. Component of a complex composed of CRB3, PALS1 and PATJ. As part of the Crumbs complex; interacts with WWP1, the interaction is enhanced by AMOTL2 and facilitates WWP1 localization to the plasma membrane. The Crumbs complex promotes monoubiquitination of AMOTL2 by WWP1, which activates the Hippo signaling pathway. Interacts (via PDZ domain) with PATJ (via N-terminus). Interacts with EZR. Interacts (via PDZ domain) with CRB1 (via C-terminal ERLI motif). While the PDZ domain is sufficient for interaction with CRB1, the adjacent SH3 and guanylate kinase-like domains are likely to contribute to a high affinity interaction. Interacts with WWTR1/TAZ (via WW domain). Interacts with MPP7. Interacts (via PDZ domain) with CRB3 (via C-terminus). Interacts with LIN7C. Interacts with MPDZ. Interacts with PARD6B. Interacts with SC6A1. Interacts with CDH5; the interaction promotes PALS1 localization to cell junctions and is required for CDH5-mediated vascular lumen formation and endothelial cell. Interacts with NPHP1 (via coiled coil and SH3 domains). Interacts with NPHP4. Interacts with CRB2.

Its subcellular location is the golgi apparatus. It localises to the cell membrane. The protein resides in the endomembrane system. It is found in the cell junction. The protein localises to the tight junction. Its subcellular location is the adherens junction. It localises to the cell projection. The protein resides in the axon. It is found in the perikaryon. The protein localises to the apical cell membrane. In terms of biological role, plays a role in tight junction biogenesis and in the establishment of cell polarity in epithelial cells. Also involved in adherens junction biogenesis by ensuring correct localization of the exocyst complex protein EXOC4/SEC8 which allows trafficking of adherens junction structural component CDH1 to the cell surface. Plays a role through its interaction with CDH5 in vascular lumen formation and endothelial membrane polarity. Required during embryonic and postnatal retinal development. Required for the maintenance of cerebellar progenitor cells in an undifferentiated proliferative state, preventing premature differentiation, and is required for cerebellar histogenesis, fissure formation, cerebellar layer organization and cortical development. Plays a role in neuronal progenitor cell survival, potentially via promotion of mTOR signaling. Plays a role in the radial and longitudinal extension of the myelin sheath in Schwann cells. May modulate SC6A1/GAT1-mediated GABA uptake by stabilizing the transporter. May play a role in the T-cell receptor-mediated activation of NF-kappa-B. Required for localization of EZR to the apical membrane of parietal cells and may play a role in the dynamic remodeling of the apical cytoskeleton. Required for the normal polarized localization of the vesicular marker STX4. Required for the correct trafficking of the myelin proteins PMP22 and MAG. Involved in promoting phosphorylation and cytoplasmic retention of transcriptional coactivators YAP1 and WWTR1/TAZ which leads to suppression of TGFB1-dependent transcription of target genes such as CCN2/CTGF, SERPINE1/PAI1, SNAI1/SNAIL1 and SMAD7. The sequence is that of Protein PALS1 from Pongo abelii (Sumatran orangutan).